Reading from the N-terminus, the 280-residue chain is NAD(P)H-quinone oxidoreductase subunit K, chloroplastic (280 aa).

[4Fe-4S] cluster contacts are provided by Cys-65, Cys-66, Cys-130, and Cys-161. The tract at residues 257–280 (LLKDWKQSNQKQEQNVKMMKEEEA) is disordered.

The protein belongs to the complex I 20 kDa subunit family. In terms of assembly, NDH is composed of at least 16 different subunits, 5 of which are encoded in the nucleus. [4Fe-4S] cluster serves as cofactor.

It is found in the plastid. Its subcellular location is the chloroplast thylakoid membrane. It carries out the reaction a plastoquinone + NADH + (n+1) H(+)(in) = a plastoquinol + NAD(+) + n H(+)(out). It catalyses the reaction a plastoquinone + NADPH + (n+1) H(+)(in) = a plastoquinol + NADP(+) + n H(+)(out). Functionally, NDH shuttles electrons from NAD(P)H:plastoquinone, via FMN and iron-sulfur (Fe-S) centers, to quinones in the photosynthetic chain and possibly in a chloroplast respiratory chain. The immediate electron acceptor for the enzyme in this species is believed to be plastoquinone. Couples the redox reaction to proton translocation, and thus conserves the redox energy in a proton gradient. The chain is NAD(P)H-quinone oxidoreductase subunit K, chloroplastic from Staurastrum punctulatum (Green alga).